Here is a 187-residue protein sequence, read N- to C-terminus: Bifunctional protein PyrR (187 aa).

The PRPP-binding signature appears at 109-121 (VILVDDVLYSGRS).

Belongs to the purine/pyrimidine phosphoribosyltransferase family. PyrR subfamily.

It carries out the reaction UMP + diphosphate = 5-phospho-alpha-D-ribose 1-diphosphate + uracil. Functionally, regulates the transcription of the pyrimidine nucleotide (pyr) operon in response to exogenous pyrimidines. Also displays a weak uracil phosphoribosyltransferase activity which is not physiologically significant. In Mycobacterium ulcerans (strain Agy99), this protein is Bifunctional protein PyrR.